The following is a 255-amino-acid chain: NAD(P)H-quinone oxidoreductase subunit K, chloroplastic (255 aa).

[4Fe-4S] cluster is bound by residues Cys-47, Cys-48, Cys-112, and Cys-143.

Belongs to the complex I 20 kDa subunit family. In terms of assembly, NDH is composed of at least 16 different subunits, 5 of which are encoded in the nucleus. The cofactor is [4Fe-4S] cluster.

The protein resides in the plastid. The protein localises to the chloroplast thylakoid membrane. It catalyses the reaction a plastoquinone + NADH + (n+1) H(+)(in) = a plastoquinol + NAD(+) + n H(+)(out). It carries out the reaction a plastoquinone + NADPH + (n+1) H(+)(in) = a plastoquinol + NADP(+) + n H(+)(out). In terms of biological role, NDH shuttles electrons from NAD(P)H:plastoquinone, via FMN and iron-sulfur (Fe-S) centers, to quinones in the photosynthetic chain and possibly in a chloroplast respiratory chain. The immediate electron acceptor for the enzyme in this species is believed to be plastoquinone. Couples the redox reaction to proton translocation, and thus conserves the redox energy in a proton gradient. This Zygnema circumcarinatum (Green alga) protein is NAD(P)H-quinone oxidoreductase subunit K, chloroplastic.